Here is a 294-residue protein sequence, read N- to C-terminus: Gene 15 protein (294 aa).

This chain is Gene 15 protein (15), found in Mycobacterium phage L5 (Mycobacteriophage L5).